The following is a 201-amino-acid chain: MAKKKQAGRRVEGWKAKSWFKVYTPDNLGKAYIGDTIASEVETVKGRIMQATLGEITNDYAKQHIKMSFKIAEVTGDAAYTEFVGHEVTRDYLRSLVKRRSSRIDCHVQVVTKDNKKVRLTISCYTFARANIAQEHALRNAITAGLVAQAQAWDLNTLVNGVVSGEISKDLFKLVKTLYPTRRVEIIKSKVEQVAAPVSTA.

Belongs to the eukaryotic ribosomal protein eS1 family.

This Methanoregula boonei (strain DSM 21154 / JCM 14090 / 6A8) protein is Small ribosomal subunit protein eS1.